The chain runs to 210 residues: Mating-type-like protein A1 (210 aa).

A DNA-binding region (homeobox) is located at residues 141–200 (SKKKRQRLDNSTKEFLEKVFEKNKQPNRRERELIAEKHGVSLSQIRVWFTNKRMRKKEPK).

It belongs to the MATA1 family. In terms of assembly, forms a heterodimer with ALPHA2.

Its subcellular location is the nucleus. Mating type proteins are sequence specific DNA-binding proteins that act as master switches in yeast differentiation by controlling gene expression in a cell type-specific fashion. Transcriptional corepressor that acts in conjunction with ALPHA2 to repress transcription both of homozygote-specific genes and of genes necessary for the white-opaque switch, a prerequisite for mating. The polypeptide is Mating-type-like protein A1 (MTLA1) (Candida albicans (strain SC5314 / ATCC MYA-2876) (Yeast)).